We begin with the raw amino-acid sequence, 309 residues long: Glutaminase (309 aa).

S64, N114, E160, N167, Y191, Y243, and V261 together coordinate substrate.

The protein belongs to the glutaminase family. As to quaternary structure, homotetramer.

The enzyme catalyses L-glutamine + H2O = L-glutamate + NH4(+). This chain is Glutaminase, found in Methylobacterium nodulans (strain LMG 21967 / CNCM I-2342 / ORS 2060).